The following is a 486-amino-acid chain: uncharacterized protein (486 aa).

This is an uncharacterized protein from Methanocaldococcus jannaschii (strain ATCC 43067 / DSM 2661 / JAL-1 / JCM 10045 / NBRC 100440) (Methanococcus jannaschii).